The sequence spans 218 residues: Protein GrpE (218 aa).

Composition is skewed to basic and acidic residues over residues 1-13 and 20-32; these read MSKNNENIKHQNN and VDKKETKNHNKQE. Residues 1 to 32 form a disordered region; sequence MSKNNENIKHQNNDKVNNQVDKKETKNHNKQE.

Belongs to the GrpE family. Homodimer.

It localises to the cytoplasm. Functionally, participates actively in the response to hyperosmotic and heat shock by preventing the aggregation of stress-denatured proteins, in association with DnaK and GrpE. It is the nucleotide exchange factor for DnaK and may function as a thermosensor. Unfolded proteins bind initially to DnaJ; upon interaction with the DnaJ-bound protein, DnaK hydrolyzes its bound ATP, resulting in the formation of a stable complex. GrpE releases ADP from DnaK; ATP binding to DnaK triggers the release of the substrate protein, thus completing the reaction cycle. Several rounds of ATP-dependent interactions between DnaJ, DnaK and GrpE are required for fully efficient folding. In Ureaplasma parvum serovar 3 (strain ATCC 27815 / 27 / NCTC 11736), this protein is Protein GrpE.